A 388-amino-acid polypeptide reads, in one-letter code: Succinate--CoA ligase [ADP-forming] subunit beta (388 aa).

One can recognise an ATP-grasp domain in the interval 9 to 244 (KEILRQAGVP…LDEEDPAEVE (236 aa)). ATP-binding positions include K46, 53-55 (GRG), E99, A102, and E107. Residues N199 and D213 each coordinate Mg(2+). Substrate contacts are provided by residues N264 and 321–323 (GIM).

The protein belongs to the succinate/malate CoA ligase beta subunit family. Heterotetramer of two alpha and two beta subunits. Mg(2+) serves as cofactor.

It catalyses the reaction succinate + ATP + CoA = succinyl-CoA + ADP + phosphate. The catalysed reaction is GTP + succinate + CoA = succinyl-CoA + GDP + phosphate. It functions in the pathway carbohydrate metabolism; tricarboxylic acid cycle; succinate from succinyl-CoA (ligase route): step 1/1. Its function is as follows. Succinyl-CoA synthetase functions in the citric acid cycle (TCA), coupling the hydrolysis of succinyl-CoA to the synthesis of either ATP or GTP and thus represents the only step of substrate-level phosphorylation in the TCA. The beta subunit provides nucleotide specificity of the enzyme and binds the substrate succinate, while the binding sites for coenzyme A and phosphate are found in the alpha subunit. This is Succinate--CoA ligase [ADP-forming] subunit beta from Albidiferax ferrireducens (strain ATCC BAA-621 / DSM 15236 / T118) (Rhodoferax ferrireducens).